Reading from the N-terminus, the 462-residue chain is Bifunctional dihydrofolate reductase-thymidylate synthase (462 aa).

The DHFR domain maps to 6-165; it reads TFSMVLAMTL…INYDYQHLIN (160 aa). Residue valine 10 participates in substrate binding. NADP(+) is bound by residues alanine 12 and 18 to 24; that span reads GIGYQNR. Aspartate 32 serves as a coordination point for substrate. Residues 49-51 and 68-71 contribute to the NADP(+) site; these read RKT and ISKN. Isoleucine 101 serves as a coordination point for substrate. 102–109 serves as a coordination point for NADP(+); sequence GGKRIFEE. Threonine 122 is a substrate binding site. The thymidylate synthase stretch occupies residues 180 to 462; sequence ENQYLDMITK…HDKIEMKMAV (283 aa). A dUMP-binding site is contributed by arginine 200. Cysteine 345 is an active-site residue. DUMP contacts are provided by residues histidine 346, 364-368, asparagine 376, and 406-408; these read QRSCD and HIY.

In the N-terminal section; belongs to the dihydrofolate reductase family. It in the C-terminal section; belongs to the thymidylate synthase family.

It carries out the reaction (6S)-5,6,7,8-tetrahydrofolate + NADP(+) = 7,8-dihydrofolate + NADPH + H(+). The enzyme catalyses dUMP + (6R)-5,10-methylene-5,6,7,8-tetrahydrofolate = 7,8-dihydrofolate + dTMP. It functions in the pathway cofactor biosynthesis; tetrahydrofolate biosynthesis; 5,6,7,8-tetrahydrofolate from 7,8-dihydrofolate: step 1/1. Functionally, bifunctional enzyme. Involved in de novo dTMP biosynthesis. Key enzyme in folate metabolism. Catalyzes an essential reaction for de novo glycine and purine synthesis, DNA precursor synthesis, and for the conversion of dUMP to dTMP. This chain is Bifunctional dihydrofolate reductase-thymidylate synthase, found in Paramecium tetraurelia.